A 378-amino-acid chain; its full sequence is UDP-N-acetylglucosamine--N-acetylmuramyl-(pentapeptide) pyrophosphoryl-undecaprenol N-acetylglucosamine transferase (378 aa).

UDP-N-acetyl-alpha-D-glucosamine-binding positions include 14-16 (TGG), Asn125, Arg165, Ser193, and Gln293.

It belongs to the glycosyltransferase 28 family. MurG subfamily.

The protein localises to the cell inner membrane. It carries out the reaction di-trans,octa-cis-undecaprenyl diphospho-N-acetyl-alpha-D-muramoyl-L-alanyl-D-glutamyl-meso-2,6-diaminopimeloyl-D-alanyl-D-alanine + UDP-N-acetyl-alpha-D-glucosamine = di-trans,octa-cis-undecaprenyl diphospho-[N-acetyl-alpha-D-glucosaminyl-(1-&gt;4)]-N-acetyl-alpha-D-muramoyl-L-alanyl-D-glutamyl-meso-2,6-diaminopimeloyl-D-alanyl-D-alanine + UDP + H(+). The protein operates within cell wall biogenesis; peptidoglycan biosynthesis. Functionally, cell wall formation. Catalyzes the transfer of a GlcNAc subunit on undecaprenyl-pyrophosphoryl-MurNAc-pentapeptide (lipid intermediate I) to form undecaprenyl-pyrophosphoryl-MurNAc-(pentapeptide)GlcNAc (lipid intermediate II). This chain is UDP-N-acetylglucosamine--N-acetylmuramyl-(pentapeptide) pyrophosphoryl-undecaprenol N-acetylglucosamine transferase, found in Bartonella bacilliformis (strain ATCC 35685 / KC583 / Herrer 020/F12,63).